A 2603-amino-acid polypeptide reads, in one-letter code: Protein SABRE (2603 aa).

Positions 1 to 35 (MAASPAKFFFGFLIVSIVLWMIFMLFAWMLSRVLG) are cleaved as a signal peptide. The N-linked (GlcNAc...) asparagine glycan is linked to asparagine 196. The tract at residues 259 to 287 (FPKSKQSSASLRSDEVRTSATAASSAKKP) is disordered. Residues asparagine 331, asparagine 486, asparagine 597, asparagine 807, asparagine 867, asparagine 887, asparagine 1154, asparagine 1249, asparagine 1280, and asparagine 1408 are each glycosylated (N-linked (GlcNAc...) asparagine). Residues 786–814 (PESGCNKGISSVKDGGPSEKINQSNSVNK) are disordered. A disordered region spans residues 1416–1436 (FHQSPSSTEHPTDVGTVYSSQ). Asparagine 1492 and asparagine 1659 each carry an N-linked (GlcNAc...) asparagine glycan. Disordered regions lie at residues 1656 to 1676 (EFEN…DDDG) and 1717 to 1777 (EPPK…DDIG). Residues 1731–1748 (KIHEENQKESCPETHQGE) show a composition bias toward basic and acidic residues. Residues 1749–1766 (MSRSSASPGRNLPSSPSH) show a composition bias toward polar residues. Residues 1995–2023 (VEEVELAKINLEEKERERKLLLDDIRKLS) are a coiled coil. An N-linked (GlcNAc...) asparagine glycan is attached at asparagine 2333. Disordered stretches follow at residues 2339–2380 (EQQE…RPRK), 2448–2479 (GKKF…KPDQ), and 2554–2603 (IRRH…DFRE). The span at 2343 to 2380 (DFSKQKVKEIKPVKSGRSSHEEKKAGKSHEEKKSRPRK) shows a compositional bias: basic and acidic residues. N-linked (GlcNAc...) asparagine glycosylation is present at asparagine 2467. Positions 2554–2565 (IRRHTKKFRPRS) are enriched in basic residues. Residues 2566-2583 (QRGSTSQQRESLPSSPIE) are compositionally biased toward polar residues. The span at 2586-2603 (PFESGYSSGSSPYEDFRE) shows a compositional bias: low complexity.

Belongs to the SABRE family. In terms of tissue distribution, highest levels in leaves, also expressed in leaves, flowers, and siliques, and, to a lower extent, in roots and stems.

It localises to the secreted. Its subcellular location is the golgi apparatus. May be involved in membrane trafficking. Required for cell expansion, especially in root cortex, probably by counteracting the action of ethylene in promoting cells radial expansion. Involved in female organ development. Antagonistically interacts with ethylene signaling to regulate plant responses to Pi starvation. The chain is Protein SABRE from Arabidopsis thaliana (Mouse-ear cress).